Here is a 466-residue protein sequence, read N- to C-terminus: Phytase A (466 aa).

The signal sequence occupies residues 1–19 (MGFLAIVLSVALLFRSTSG). Residues Cys-31 and Cys-40 are joined by a disulfide bond. 5 residues coordinate 1D-myo-inositol hexakisphosphate: Tyr-51, Arg-81, His-82, Arg-85, and Thr-88. Cystine bridges form between Cys-71-Cys-414, Cys-215-Cys-465, Cys-264-Cys-282, and Cys-436-Cys-444. The active-site Nucleophile is His-82. An N-linked (GlcNAc...) asparagine glycan is attached at Asn-120. Arg-165 is a binding site for 1D-myo-inositol hexakisphosphate. N-linked (GlcNAc...) asparagine glycosylation is found at Asn-207 and Asn-230. Residue Lys-301 coordinates 1D-myo-inositol hexakisphosphate. 2 N-linked (GlcNAc...) asparagine glycosylation sites follow: Asn-339 and Asn-352. Residues His-361 and Asp-362 each contribute to the 1D-myo-inositol hexakisphosphate site. Asn-376 carries an N-linked (GlcNAc...) asparagine glycan.

The protein belongs to the histidine acid phosphatase family. In terms of assembly, monomer.

It localises to the secreted. It carries out the reaction 1D-myo-inositol hexakisphosphate + H2O = 1D-myo-inositol 1,2,4,5,6-pentakisphosphate + phosphate. The catalysed reaction is 1D-myo-inositol 1,2,4,5,6-pentakisphosphate + H2O = 1D-myo-inositol 1,2,5,6-tetrakisphosphate + phosphate. The enzyme catalyses 1D-myo-inositol 1,2,5,6-tetrakisphosphate + H2O = 1D-myo-inositol 1,2,6-trisphosphate + phosphate. It catalyses the reaction 1D-myo-inositol 1,2,6-trisphosphate + H2O = 1D-myo-inositol 1,2-bisphosphate + phosphate. It carries out the reaction 1D-myo-inositol 1,2-bisphosphate + H2O = 1D-myo-inositol 2-phosphate + phosphate. Catalyzes the phosphate monoester hydrolysis of phytic acid (myo-inositol hexakisphosphate), which results in the stepwise formation of myo-inositol pentakis-, tetrakis-, tris-, bis-, and monophosphates, as well as the liberation of inorganic phosphate. Myo-inositol 2-monophosphate is the end product. Has a broad substrate specificity and is also able to dephosphorylate other classic acid phosphatase substrates such as p-nitrophenyl phosphate, phenyl phosphate, fructose 1,6-bisphosphate, glucose 6-phosphate, 3-phosphoglycerate, as well as ADP and ATP. This chain is Phytase A, found in Aspergillus terreus.